Here is a 347-residue protein sequence, read N- to C-terminus: Fructose-1,6-bisphosphatase class 1 (347 aa).

Glutamate 106, aspartate 128, isoleucine 130, and aspartate 131 together coordinate Mg(2+). Substrate is bound by residues 131-134 (DGSS), asparagine 223, tyrosine 251, and lysine 281. Glutamate 287 lines the Mg(2+) pocket.

It belongs to the FBPase class 1 family. Homotetramer. The cofactor is Mg(2+).

Its subcellular location is the cytoplasm. The enzyme catalyses beta-D-fructose 1,6-bisphosphate + H2O = beta-D-fructose 6-phosphate + phosphate. Its pathway is carbohydrate biosynthesis; Calvin cycle. The protein is Fructose-1,6-bisphosphatase class 1 of Synechocystis sp. (strain ATCC 27184 / PCC 6803 / Kazusa).